The chain runs to 286 residues: Aquaporin PIP1-1 (286 aa).

The segment at 1 to 34 (MEGKEEDVRLGANKFSERQPIGTAAQSDKGYKEP) is disordered. Residues 1 to 54 (MEGKEEDVRLGANKFSERQPIGTAAQSDKGYKEPPPAPLFEPGELTSWSFYRAG) lie on the Cytoplasmic side of the membrane. A helical membrane pass occupies residues 55–75 (IAEFMATFLFLYITILTVMGV). Residues 76-88 (VKSNSKCSTVGIQ) are Extracellular-facing. Residues 89–109 (GIAWAFGGMIFALVYCTAGIS) traverse the membrane as a helical segment. The Cytoplasmic segment spans residues 110 to 131 (GGHINPAVTFGLFLARKLSLTR). The short motif at 114 to 116 (NPA) is the NPA 1 element. Residues 132–152 (ALFYMVMQCLGAICGAGVVKG) traverse the membrane as a helical segment. At 153–174 (YQKGLYESNGGGANVVAPGYTK) the chain is on the extracellular side. The helical transmembrane segment at 175 to 195 (GDGLGAEIVGTFILVYTVFSA) threads the bilayer. At 196–208 (TDAKRNARDSHVP) the chain is on the cytoplasmic side. Residues 209–229 (ILAPLPIGFAVFLVHLATIPI) form a helical membrane-spanning segment. Residues 230–256 (TGTGINPARSLGAAIIYNKKHAWDDHW) are Extracellular-facing. The NPA 2 signature appears at 235 to 237 (NPA). Residues 257 to 277 (IFWVGPFIGAALAAIYHQIVI) form a helical membrane-spanning segment. Topologically, residues 278–286 (RAIPFKSRP) are cytoplasmic.

Belongs to the MIP/aquaporin (TC 1.A.8) family. PIP (TC 1.A.8.11) subfamily. As to expression, expressed in leaves, roots, stems, flowers and fruits, with highest levels in roots.

It localises to the cell membrane. In terms of biological role, water channel required to facilitate the transport of water across cell membrane; mercury-insensitive. Promotes primary root elongation and root hair formation. Contributes to the tolerance to multiple abiotic stresses including salt (NaCl), cold and water deprivation, by modulating cytosolic K(+)/Na(+) ratio, maintaining osmotic balance, and reducing membrane injury (e.g. oxidative injury). Also regulates the expression of abscisic acid (ABA)-responsive genes during dehydration and salt stresses. The protein is Aquaporin PIP1-1 of Musa acuminata (Banana).